A 177-amino-acid chain; its full sequence is Adenine phosphoribosyltransferase (177 aa).

It belongs to the purine/pyrimidine phosphoribosyltransferase family. As to quaternary structure, homodimer.

It is found in the cytoplasm. It carries out the reaction AMP + diphosphate = 5-phospho-alpha-D-ribose 1-diphosphate + adenine. The protein operates within purine metabolism; AMP biosynthesis via salvage pathway; AMP from adenine: step 1/1. Catalyzes a salvage reaction resulting in the formation of AMP, that is energically less costly than de novo synthesis. The protein is Adenine phosphoribosyltransferase of Leptospira biflexa serovar Patoc (strain Patoc 1 / Ames).